The following is a 239-amino-acid chain: Ribonuclease PH (239 aa).

Residues Arg86 and 124–126 each bind phosphate; that span reads GTR.

It belongs to the RNase PH family. Homohexameric ring arranged as a trimer of dimers.

It carries out the reaction tRNA(n+1) + phosphate = tRNA(n) + a ribonucleoside 5'-diphosphate. Functionally, phosphorolytic 3'-5' exoribonuclease that plays an important role in tRNA 3'-end maturation. Removes nucleotide residues following the 3'-CCA terminus of tRNAs; can also add nucleotides to the ends of RNA molecules by using nucleoside diphosphates as substrates, but this may not be physiologically important. Probably plays a role in initiation of 16S rRNA degradation (leading to ribosome degradation) during starvation. This chain is Ribonuclease PH, found in Sinorhizobium medicae (strain WSM419) (Ensifer medicae).